The chain runs to 438 residues: Serine/threonine-protein kinase VIK (438 aa).

The tract at residues 1-31 (MSSDSPAAGDGGEQAAAGTSVPSPSYDKQKE) is disordered. ANK repeat units lie at residues 36–65 (SRTSLILWHAHQNDAAAVRKLLEEDPTLVH), 70–99 (DKRTPLHVASLHGWIDVVKCLLEFGADVNA), and 103–133 (WKNTPLADAEGARKQKMIELLKSHGGLSYGQ). A Protein kinase domain is found at 162 to 427 (FSNAAMIGKG…KRLEKIKETL (266 aa)). Residues 168 to 176 (IGKGSFGEI) and K189 contribute to the ATP site. D285 acts as the Proton acceptor in catalysis.

It belongs to the protein kinase superfamily. Ser/Thr protein kinase family. Interacts with BRL2. Binds to MSSP1/TMT1 at the tonoplast. Post-translationally, phosphorylated. Restricted to mature vascular cells. Mostly expressed in mature leaves and seeds, and, to a lower level, in seedlings, young leaves, flowers and siliques.

The protein localises to the vacuole. It catalyses the reaction L-seryl-[protein] + ATP = O-phospho-L-seryl-[protein] + ADP + H(+). It carries out the reaction L-threonyl-[protein] + ATP = O-phospho-L-threonyl-[protein] + ADP + H(+). Its function is as follows. Serine/threonine protein kinase which may function as an adapter protein for BRL2. Required during vascular development for the establishment of vein pattern in foliar organs. Mediates MSSP1/TMT1 phosphorylation and activation to enhance its carrier activity and consequently vacuolar sugar accumulation, particularly in response to cold. In Arabidopsis thaliana (Mouse-ear cress), this protein is Serine/threonine-protein kinase VIK.